Consider the following 370-residue polypeptide: Aspartate-semialdehyde dehydrogenase (370 aa).

Residues 10 to 13 (RGMV), 37 to 38 (TS), and Q73 each bind NADP(+). R102 serves as a coordination point for phosphate. C135 (acyl-thioester intermediate) is an active-site residue. Q162 provides a ligand contact to substrate. NADP(+)-binding positions include 165-166 (SG) and P193. E241 lines the substrate pocket. K244 provides a ligand contact to phosphate. R268 provides a ligand contact to substrate. H275 acts as the Proton acceptor in catalysis. Position 351 (Q351) interacts with NADP(+).

It belongs to the aspartate-semialdehyde dehydrogenase family. As to quaternary structure, homodimer.

It catalyses the reaction L-aspartate 4-semialdehyde + phosphate + NADP(+) = 4-phospho-L-aspartate + NADPH + H(+). It functions in the pathway amino-acid biosynthesis; L-lysine biosynthesis via DAP pathway; (S)-tetrahydrodipicolinate from L-aspartate: step 2/4. Its pathway is amino-acid biosynthesis; L-methionine biosynthesis via de novo pathway; L-homoserine from L-aspartate: step 2/3. The protein operates within amino-acid biosynthesis; L-threonine biosynthesis; L-threonine from L-aspartate: step 2/5. In terms of biological role, catalyzes the NADPH-dependent formation of L-aspartate-semialdehyde (L-ASA) by the reductive dephosphorylation of L-aspartyl-4-phosphate. This is Aspartate-semialdehyde dehydrogenase (asd) from Pseudomonas aeruginosa (strain ATCC 15692 / DSM 22644 / CIP 104116 / JCM 14847 / LMG 12228 / 1C / PRS 101 / PAO1).